Here is a 185-residue protein sequence, read N- to C-terminus: Ribosome-recycling factor (185 aa).

The protein belongs to the RRF family.

The protein localises to the cytoplasm. In terms of biological role, responsible for the release of ribosomes from messenger RNA at the termination of protein biosynthesis. May increase the efficiency of translation by recycling ribosomes from one round of translation to another. The chain is Ribosome-recycling factor from Francisella philomiragia subsp. philomiragia (strain ATCC 25017 / CCUG 19701 / FSC 153 / O#319-036).